Consider the following 501-residue polypeptide: 2,3-bisphosphoglycerate-independent phosphoglycerate mutase (501 aa).

Mn(2+)-binding residues include Asp12 and Ser62. Catalysis depends on Ser62, which acts as the Phosphoserine intermediate. Substrate-binding positions include His121, 150-151 (RD), Arg182, Arg188, 253-256 (RSDR), and Lys322. Residues Asp389, His393, Asp430, His431, and His449 each contribute to the Mn(2+) site.

This sequence belongs to the BPG-independent phosphoglycerate mutase family. In terms of assembly, monomer. The cofactor is Mn(2+).

The catalysed reaction is (2R)-2-phosphoglycerate = (2R)-3-phosphoglycerate. It participates in carbohydrate degradation; glycolysis; pyruvate from D-glyceraldehyde 3-phosphate: step 3/5. Its function is as follows. Catalyzes the interconversion of 2-phosphoglycerate and 3-phosphoglycerate. In Ehrlichia ruminantium (strain Welgevonden), this protein is 2,3-bisphosphoglycerate-independent phosphoglycerate mutase.